The chain runs to 137 residues: Mediator of RNA polymerase II transcription subunit 21 (137 aa).

The segment at 37–56 is disordered; sequence PKDTIAPSKADQPPEVDTLP. A coiled-coil region spans residues 87-130; sequence GLDNSEQDQLQSIKELEEELNVAEKQRQEAVKEKDEVLVKLDQT.

This sequence belongs to the Mediator complex subunit 21 family. Component of the Mediator complex.

Its subcellular location is the nucleus. Its function is as follows. Component of the Mediator complex, a coactivator involved in the regulated transcription of nearly all RNA polymerase II-dependent genes. Mediator functions as a bridge to convey information from gene-specific regulatory proteins to the basal RNA polymerase II transcription machinery. Mediator is recruited to promoters by direct interactions with regulatory proteins and serves as a scaffold for the assembly of a functional preinitiation complex with RNA polymerase II and the general transcription factors. This is Mediator of RNA polymerase II transcription subunit 21 (srb-7) from Neurospora crassa (strain ATCC 24698 / 74-OR23-1A / CBS 708.71 / DSM 1257 / FGSC 987).